Here is a 512-residue protein sequence, read N- to C-terminus: Glutathione-binding protein GsiB (512 aa).

Positions 1–26 (MARAVHRSGLVALGIVTALMASCAFA) are cleaved as a signal peptide.

This sequence belongs to the bacterial solute-binding protein 5 family. In terms of assembly, the complex is composed of two ATP-binding proteins (GsiA), two transmembrane proteins (GsiC and GsiD) and a solute-binding protein (GsiB).

It localises to the periplasm. Part of the ABC transporter complex GsiABCD involved in glutathione import. Binds glutathione. This chain is Glutathione-binding protein GsiB, found in Shigella dysenteriae serotype 1 (strain Sd197).